We begin with the raw amino-acid sequence, 1247 residues long: uncharacterized protein (1247 aa).

8 disordered regions span residues 25 to 141 (KYNN…HSPP), 169 to 431 (AANN…QQPQ), 472 to 667 (QQQP…PSSS), 738 to 770 (NSNS…SEPI), 807 to 857 (YSNR…QNIE), 869 to 1087 (GKNF…NNNN), 1099 to 1122 (STLN…ESQQ), and 1139 to 1162 (QQQQ…KGDG). Low complexity predominate over residues 26–125 (YNNSNNYNNN…SNNSINSNSY (100 aa)). Residues 126-139 (KVNTPTQNGKSSHS) show a composition bias toward polar residues. Low complexity-rich tracts occupy residues 169–178 (AANNGSSNSS), 185–223 (SNSN…NYNS), and 230–341 (NNNN…YSNS). Residues 342–356 (KYNQQKSYNNAPHQL) show a composition bias toward polar residues. Composition is skewed to low complexity over residues 363 to 375 (NSYY…NNGN), 385 to 394 (GSGNSSNSNG), 409 to 431 (QSQS…QQPQ), and 472 to 484 (QQQP…QQQQ). Positions 511-522 (GLNNSLNGQTDL) are enriched in polar residues. 6 stretches are compositionally biased toward low complexity: residues 523-544 (NNSN…TNNN), 553-628 (YNYN…VGSN), 655-667 (TPSS…PSSS), 738-759 (NSNS…NNNH), 807-855 (YSNR…DSQN), and 871-928 (NFNN…ENNN). The segment covering 929–942 (GDVFSNGFSTWTPK) has biased composition (polar residues). The segment covering 943–983 (SGSNSLNNSQNNLSNGQNSSNNSQNNLNNSQNSLNSSGNHH) has biased composition (low complexity). The span at 984–995 (SNYHGHNNHHHY) shows a compositional bias: basic residues. The span at 996–1021 (NNNNNNNNNNNNNNNNNNNNNNNGNG) shows a compositional bias: low complexity. Polar residues predominate over residues 1026–1044 (YYNNKYQQKSPQHQSSNSV). A compositionally biased stretch (pro residues) spans 1047–1060 (IPPPGFSTIAPPPG). Over residues 1064–1087 (NNNNNNNNNNNNNNNKNNNSNNNN) the composition is skewed to low complexity. Polar residues predominate over residues 1099 to 1108 (STLNNSQDDS). Residues 1110 to 1122 (QQEQEQQEQESQQ) are compositionally biased toward low complexity.

This is an uncharacterized protein from Dictyostelium discoideum (Social amoeba).